The sequence spans 84 residues: Defensin-like protein 49 (84 aa).

Residues 1-29 (MGITKSLMIFFHIVLLAVSLSNNIILTSG) form the signal peptide. 4 disulfide bridges follow: C40–C82, C44–C68, C54–C80, and C58–C81.

The protein belongs to the DEFL family.

The protein localises to the secreted. The polypeptide is Defensin-like protein 49 (Arabidopsis thaliana (Mouse-ear cress)).